Reading from the N-terminus, the 36-residue chain is Potassium channel toxin alpha-KTx 6.14 (36 aa).

Intrachain disulfides connect cysteine 5-cysteine 25, cysteine 11-cysteine 30, cysteine 15-cysteine 32, and cysteine 20-cysteine 35.

Expressed by the venom gland.

The protein resides in the secreted. In terms of biological role, blocks Shaker B channels expressed in Sf9 cells, with a dissociation constant of 52 nM. In Hoffmannihadrurus gertschi (Scorpion), this protein is Potassium channel toxin alpha-KTx 6.14.